A 475-amino-acid polypeptide reads, in one-letter code: ATP synthase subunit beta (475 aa).

Position 155–162 (155–162 (GGAGVGKT)) interacts with ATP.

It belongs to the ATPase alpha/beta chains family. In terms of assembly, F-type ATPases have 2 components, CF(1) - the catalytic core - and CF(0) - the membrane proton channel. CF(1) has five subunits: alpha(3), beta(3), gamma(1), delta(1), epsilon(1). CF(0) has three main subunits: a(1), b(2) and c(9-12). The alpha and beta chains form an alternating ring which encloses part of the gamma chain. CF(1) is attached to CF(0) by a central stalk formed by the gamma and epsilon chains, while a peripheral stalk is formed by the delta and b chains.

The protein resides in the cell inner membrane. It carries out the reaction ATP + H2O + 4 H(+)(in) = ADP + phosphate + 5 H(+)(out). In terms of biological role, produces ATP from ADP in the presence of a proton gradient across the membrane. The catalytic sites are hosted primarily by the beta subunits. The protein is ATP synthase subunit beta of Rhizobium etli (strain CIAT 652).